The sequence spans 411 residues: Protrudin (411 aa).

The interval 1-27 (MQTSEREGSGPELSPSVMPEAPLESPP) is disordered. At 1–66 (MQTSEREGSG…AGDGVRYLLR (66 aa)) the chain is on the cytoplasmic side. The sufficient for homooligomerization stretch occupies residues 1-92 (MQTSEREGSG…LFLTLNEGAW (92 aa)). A sufficient for localization to endoplasmic reticulum tubular network and for interactions with REEP1, REEP5, ATL1, ATL2, ATL3 and SPAST region spans residues 1-205 (MQTSEREGSG…LYLLPLCWVL (205 aa)). Positions 51-64 (LEPLKDAGDGVRYL) are necessary for interaction with RAB11A and function in neurite outgrowth. The helical transmembrane segment at 67–87 (WQMPLCSLLTCLGLNVLFLTL) threads the bilayer. Residue N88 is a topological domain, lumenal. A helical transmembrane segment spans residues 89–109 (EGAWYSVGALMISVPALLGYL). The Cytoplasmic segment spans residues 110 to 187 (QEVCRARLPE…NPVVSSQFYG (78 aa)). Positions 188-208 (ALLGTICMLYLLPLCWVLTLL) form an intramembrane region, helical. Topologically, residues 209 to 411 (NSTLFLGNVE…CASCNQTLSK (203 aa)) are cytoplasmic. The disordered stretch occupies residues 234-286 (MNPKQEEHAFESPPPPDVGGKGGLMDSTPALTPTEDLTPGSVEEAEEAEPDEE). Positions 271-361 (TPGSVEEAEE…GCSATFSVLK (91 aa)) are necessary for interaction with KIF5A. Over residues 276 to 286 (EEAEEAEPDEE) the composition is skewed to acidic residues. The segment at 286 to 292 (EFKDAIE) is necessary for interaction with VAPA. The FYVE-type zinc finger occupies 344–410 (TNNFGNCTGC…VCASCNQTLS (67 aa)). Residues C350, C353, C366, C369, C374, C377, C402, and C405 each contribute to the Zn(2+) site.

In terms of assembly, can form homooligomers (monomers, dimers and tetramers). Interacts with RAB11A (GDP-bound form); regulates RAB11A. Interacts with FKBP8; may negatively regulate ZFYVE27 phosphorylation. Interacts with VAPA (via MSP domain); may regulate ZFYVE27 retention in the endoplasmic reticulum and its function in cell projections formation. Interacts with VAPB (via MSP domain). Interacts with RAB11B (GDP-bound form), REEP1, REEP5, ATL1, ATL2, ATL3, SPAST, SURF4, KIF5A, KIF5B, KIF5C and RTN3. In terms of processing, phosphorylated. Phosphorylation is induced by NGF through the MAPK/ERK pathway and modulates interaction with RAB11A.

The protein resides in the recycling endosome membrane. It localises to the endoplasmic reticulum membrane. Its subcellular location is the cell projection. The protein localises to the growth cone membrane. Key regulator of RAB11-dependent vesicular trafficking during neurite extension through polarized membrane transport. Promotes axonal elongation and contributes to the establishment of neuronal cell polarity. Involved in nerve growth factor-induced neurite formation in VAPA-dependent manner. Contributes to both the formation and stabilization of the tubular ER network. Involved in ER morphogenesis by regulating the sheet-to-tubule balance and possibly the density of tubule interconnections. Acts as an adapter protein that facilitates the interaction of KIF5A with VAPA, VAPB, SURF4, RAB11A, RAB11B and RTN3 and the ZFYVE27-KIF5A complex contributes to the transport of these proteins in neurons. Can induce formation of neurite-like membrane protrusions in non-neuronal cells in a KIF5A/B-dependent manner. This is Protrudin (ZFYVE27) from Pongo abelii (Sumatran orangutan).